We begin with the raw amino-acid sequence, 540 residues long: NXPE family member 1 (540 aa).

A signal peptide spans 1-22; the sequence is MLHKYLKLICLLAAICVLCIIS. Residues asparagine 24, asparagine 42, asparagine 87, asparagine 155, asparagine 205, and asparagine 291 are each glycosylated (N-linked (GlcNAc...) asparagine).

The protein belongs to the NXPE family. Intestine, and to a lesser extent in kidney.

The protein resides in the secreted. This chain is NXPE family member 1 (NXPE1), found in Oryctolagus cuniculus (Rabbit).